Reading from the N-terminus, the 214-residue chain is FSCSQCDESFVQRSELELHRQLHSGDKQFTCSECGKCFKRFSLLKEHHRIHTGENTFTCDECGKCFTQKSHMTAHQKSHLGKKPFCCSECGKHFKQNSQLVVHQRTHTGEKPFTCTESGQWFKLQSYLTEHQKSHTGEKPFSCSDCGKCFKRHSLFIEHQRIHTGEDTFSCSVCEKTFTRRSHLTAHEKCHEENNPFPFLNTLTFPGLAQIFED.

7 consecutive C2H2-type zinc fingers follow at residues 1–23, 29–51, 57–79, 85–107, 113–135, 141–163, and 169–191; these read FSCS…RQLH, FTCS…HRIH, FTCD…QKSH, FCCS…QRTH, FTCT…QKSH, FSCS…QRIH, and FSCS…EKCH.

The protein belongs to the krueppel C2H2-type zinc-finger protein family.

The protein localises to the nucleus. Functionally, may be involved in transcriptional regulation. This Xenopus laevis (African clawed frog) protein is Oocyte zinc finger protein XlCOF10.